The primary structure comprises 170 residues: Cytochrome P450 monooxygenase oryQ (170 aa).

A heme-binding site is contributed by Cys-85.

It belongs to the cytochrome P450 family. Heme is required as a cofactor.

Its pathway is secondary metabolite biosynthesis. Functionally, cytochrome P450 monooxygenase; part of the gene cluster that mediates the biosynthesis of oryzines, natural products with an unusual maleidride backbone. The two subunits of the fungal fatty acid synthase oryfasA and oryfasB probably form octenoic acid. This fatty acid is most likely activated by the acyl-CoA ligase oryP to give octenyl-CoA before the citrate synthase-like protein oryE catalyzes condensation with oxaloacetate to form tricarboxylic acid. The next steps of the pathways are conjectural, but a favorite possible route has been proposed, beginning with decarboxylation and concomitant dehydration by the decarboxylase oryM, followed by tautomerization, which may lead to the production of a diene intermediate. Reduction of this diene intermediate could give the known metabolite piliformic acid. On the pathway to oryzine B and oryzine A, however, hydroxylation of the diene by the alpha-ketoglutarate-dependent dioxygenase oryG and lactonisation by the lactonohydrolases oryH or oryL could give oryzine B directly. Finally, enoyl reduction by the dehydrogenase oryD would then convert oryzine B into oryzine A. This is Cytochrome P450 monooxygenase oryQ from Aspergillus oryzae (strain ATCC 42149 / RIB 40) (Yellow koji mold).